The following is a 322-amino-acid chain: Ribonuclease Z (322 aa).

Zn(2+)-binding residues include His60, His62, Asp64, His65, His140, Asp210, and His270. The Proton acceptor role is filled by Asp64.

The protein belongs to the RNase Z family. Homodimer. The cofactor is Zn(2+).

The catalysed reaction is Endonucleolytic cleavage of RNA, removing extra 3' nucleotides from tRNA precursor, generating 3' termini of tRNAs. A 3'-hydroxy group is left at the tRNA terminus and a 5'-phosphoryl group is left at the trailer molecule.. Functionally, zinc phosphodiesterase, which displays some tRNA 3'-processing endonuclease activity. Probably involved in tRNA maturation, by removing a 3'-trailer from precursor tRNA. In Methanococcus aeolicus (strain ATCC BAA-1280 / DSM 17508 / OCM 812 / Nankai-3), this protein is Ribonuclease Z.